The sequence spans 114 residues: Large ribosomal subunit protein uL22 (114 aa).

The protein belongs to the universal ribosomal protein uL22 family. Part of the 50S ribosomal subunit.

This protein binds specifically to 23S rRNA; its binding is stimulated by other ribosomal proteins, e.g. L4, L17, and L20. It is important during the early stages of 50S assembly. It makes multiple contacts with different domains of the 23S rRNA in the assembled 50S subunit and ribosome. Functionally, the globular domain of the protein is located near the polypeptide exit tunnel on the outside of the subunit, while an extended beta-hairpin is found that lines the wall of the exit tunnel in the center of the 70S ribosome. In Streptococcus pneumoniae (strain Taiwan19F-14), this protein is Large ribosomal subunit protein uL22.